The sequence spans 418 residues: Bile acid-CoA:amino acid N-acyltransferase (418 aa).

Phosphoserine is present on S125. Catalysis depends on charge relay system residues C235, D328, and H362. S416 is subject to Phosphoserine.

It belongs to the C/M/P thioester hydrolase family. Monomer. As to expression, expressed in the gallbladder mucosa and pancreas. Expressed in hepatocytes (at protein level).

Its subcellular location is the cytoplasm. The protein resides in the cytosol. It localises to the peroxisome. It catalyses the reaction choloyl-CoA + glycine = glycocholate + CoA + H(+). It carries out the reaction hexadecanoyl-CoA + H2O = hexadecanoate + CoA + H(+). The enzyme catalyses choloyl-CoA + H2O = cholate + CoA + H(+). The catalysed reaction is chenodeoxycholoyl-CoA + H2O = chenodeoxycholate + CoA + H(+). It catalyses the reaction eicosanoyl-CoA + H2O = eicosanoate + CoA + H(+). It carries out the reaction octadecanoyl-CoA + H2O = octadecanoate + CoA + H(+). The enzyme catalyses docosanoyl-CoA + H2O = docosanoate + CoA + H(+). The catalysed reaction is tetracosanoyl-CoA + H2O = tetracosanoate + CoA + H(+). It catalyses the reaction hexacosanoyl-CoA + H2O = hexacosanoate + CoA + H(+). It carries out the reaction dodecanoyl-CoA + H2O = dodecanoate + CoA + H(+). The enzyme catalyses tetradecanoyl-CoA + H2O = tetradecanoate + CoA + H(+). The catalysed reaction is choloyl-CoA + taurine = taurocholate + CoA + H(+). It catalyses the reaction chenodeoxycholoyl-CoA + glycine = glycochenodeoxycholate + CoA + H(+). It carries out the reaction chenodeoxycholoyl-CoA + taurine = taurochenodeoxycholate + CoA + H(+). The enzyme catalyses eicosanoyl-CoA + glycine = N-eicosanoylglycinate + CoA + H(+). The catalysed reaction is hexacosanoyl-CoA + glycine = N-hexacosanoylglycine + CoA + H(+). It catalyses the reaction docosanoyl-CoA + glycine = N-docosanoylglycine + CoA + H(+). Functionally, catalyzes the amidation of bile acids (BAs) with the amino acids taurine and glycine. More than 95% of the BAs are N-acyl amidates with glycine and taurine. Amidation of BAs in the liver with glycine or taurine prior to their excretion into bile is an important biochemical event in bile acid metabolism. This conjugation (or amidation) plays several important biological roles in that it promotes the secretion of BAs and cholesterol into bile and increases the detergent properties of BAs in the intestine, which facilitates lipid and vitamin absorption. May also act as an acyl-CoA thioesterase that regulates intracellular levels of free fatty acids. In vitro, catalyzes the hydrolysis of long- and very long-chain saturated acyl-CoAs to the free fatty acid and coenzyme A (CoASH), and conjugates glycine to these acyl-CoAs. The protein is Bile acid-CoA:amino acid N-acyltransferase (BAAT) of Homo sapiens (Human).